The chain runs to 145 residues: 3-hydroxyacyl-[acyl-carrier-protein] dehydratase FabZ (145 aa).

The active site involves histidine 51.

The protein belongs to the thioester dehydratase family. FabZ subfamily.

The protein localises to the cytoplasm. The catalysed reaction is a (3R)-hydroxyacyl-[ACP] = a (2E)-enoyl-[ACP] + H2O. In terms of biological role, involved in unsaturated fatty acids biosynthesis. Catalyzes the dehydration of short chain beta-hydroxyacyl-ACPs and long chain saturated and unsaturated beta-hydroxyacyl-ACPs. The chain is 3-hydroxyacyl-[acyl-carrier-protein] dehydratase FabZ from Staphylococcus epidermidis (strain ATCC 35984 / DSM 28319 / BCRC 17069 / CCUG 31568 / BM 3577 / RP62A).